Reading from the N-terminus, the 603-residue chain is Adenine deaminase (603 aa).

This sequence belongs to the metallo-dependent hydrolases superfamily. Adenine deaminase family. Homodimer. The cofactor is Mn(2+).

It catalyses the reaction adenine + H2O + H(+) = hypoxanthine + NH4(+). In Klebsiella pneumoniae subsp. pneumoniae (strain ATCC 700721 / MGH 78578), this protein is Adenine deaminase.